We begin with the raw amino-acid sequence, 321 residues long: MKLQLIIPFSFLISYVSAHTIFMKLQSGGTLYNTSYAIRTPTYDGPINDVTTEYVACNGGPNPTTPSSNIINVVAGSTVNAIWRHTLDSTPANDATYVLDPSHLGPVMAYMKKVTDATTDVGYGPGWFKISEQGLNVATQGWATTDLINNAGVQSITIPSCIANGQYLLRAELIALHSAGGSQGAQLYMECAQINVSGGTGTSTPSTVSFPGAYGQSDPGILINIYQTLTTYTIPGPTPFVCGAAQSTAKSSSTSTAKPTSTSTLSTSTVTKTSSSAVASGTGTAAIYAQCGGQGWTGATVCASGSKCVVSSAFYSQCLPS.

Positions 1-18 (MKLQLIIPFSFLISYVSA) are cleaved as a signal peptide. His19 lines the Cu(2+) pocket. N-linked (GlcNAc...) asparagine glycosylation occurs at Asn33. 2 disulfides stabilise this stretch: Cys57/Cys191 and Cys161/Cys242. His103 serves as a coordination point for Cu(2+). His177 and Gln186 together coordinate O2. Cu(2+) is bound at residue Tyr188. The N-linked (GlcNAc...) asparagine glycan is linked to Asn195. A CBM1 domain is found at 283-319 (GTAAIYAQCGGQGWTGATVCASGSKCVVSSAFYSQCL).

This sequence belongs to the polysaccharide monooxygenase AA9 family. Cu(2+) serves as cofactor.

Its subcellular location is the secreted. It catalyses the reaction [(1-&gt;4)-beta-D-glucosyl]n+m + reduced acceptor + O2 = 4-dehydro-beta-D-glucosyl-[(1-&gt;4)-beta-D-glucosyl]n-1 + [(1-&gt;4)-beta-D-glucosyl]m + acceptor + H2O.. Major lytic polysaccharide monooxygenase (LPMO) that depolymerizes crystalline and amorphous polysaccharides via the oxidation of scissile alpha- or beta-(1-4)-glycosidic bonds, yielding C1 and C4 oxidation products. Catalysis by LPMOs requires the reduction of the active-site copper from Cu(II) to Cu(I) by a reducing agent and H(2)O(2) or O(2) as a cosubstrate. The protein is AA9 family lytic polysaccharide monooxygenase C of Botryotinia fuckeliana (strain B05.10) (Noble rot fungus).